The primary structure comprises 33 residues: Beta-amanitin proprotein (33 aa).

Positions 1–10 are excised as a propeptide; it reads MSDINATRLP. The cyclopeptide (Ile-Pro) cross-link spans 11-18; sequence IWGIGCDP. Residues 12-16 constitute a cross-link (2'-cysteinyl-6'-hydroxytryptophan sulfoxide (Trp-Cys)); that stretch reads WGIGC. A propeptide spanning residues 19–33 is cleaved from the precursor; it reads CVGDEVTALLTRGEA.

Belongs to the MSDIN fungal toxin family. Processed by the macrocyclase-peptidase enzyme POPB to yield a toxic cyclic decapeptide. POPB first removes 10 residues from the N-terminus. Conformational trapping of the remaining peptide forces the enzyme to release this intermediate rather than proceed to macrocyclization. The enzyme rebinds the remaining peptide in a different conformation and catalyzes macrocyclization of the N-terminal 8 residues.

In terms of biological role, toxin belonging to the bicyclic octapeptides amatoxins that acts by binding non-competitively to RNA polymerase II and greatly slowing the elongation of transcripts from target promoters. This Amanita fuligineoides protein is Beta-amanitin proprotein.